A 116-amino-acid chain; its full sequence is NADH-ubiquinone oxidoreductase chain 3 (116 aa).

Helical transmembrane passes span 3–23 (LIMT…TVSF), 56–76 (FFLV…LLPL), and 87–107 (GTFF…IYEW).

The protein belongs to the complex I subunit 3 family.

Its subcellular location is the mitochondrion membrane. It catalyses the reaction a ubiquinone + NADH + 5 H(+)(in) = a ubiquinol + NAD(+) + 4 H(+)(out). Functionally, core subunit of the mitochondrial membrane respiratory chain NADH dehydrogenase (Complex I) that is believed to belong to the minimal assembly required for catalysis. Complex I functions in the transfer of electrons from NADH to the respiratory chain. The immediate electron acceptor for the enzyme is believed to be ubiquinone. This Cyprinus carpio (Common carp) protein is NADH-ubiquinone oxidoreductase chain 3 (MT-ND3).